Consider the following 84-residue polypeptide: Large ribosomal subunit protein bL31B (84 aa).

The protein belongs to the bacterial ribosomal protein bL31 family. Type B subfamily. Part of the 50S ribosomal subunit.

In Acinetobacter baumannii (strain AB307-0294), this protein is Large ribosomal subunit protein bL31B.